A 67-amino-acid polypeptide reads, in one-letter code: MAVPKKRTSKSKTKIRKTTWKKEACESAIKAFSLAKSILSQRSKSFYYSKKNIILPSSFESQSKEEE.

It belongs to the bacterial ribosomal protein bL32 family.

It localises to the plastid. It is found in the chloroplast. This Chara vulgaris (Common stonewort) protein is Large ribosomal subunit protein bL32c.